A 386-amino-acid chain; its full sequence is Patatin-B1 (386 aa).

Positions 1 to 23 (MATTKSFLILFFMILATTSSTCA) are cleaved as a signal peptide. The PNPLA domain occupies 32 to 229 (LSIDGGGIKG…TVGDPALLSL (198 aa)). Positions 36-41 (GGGIKG) match the GXGXXG motif. The GXSXG signature appears at 75–79 (GTSTG). The active-site Nucleophile is the Ser77. Asn115 carries N-linked (GlcNAc...) asparagine glycosylation. Asp215 functions as the Proton acceptor in the catalytic mechanism. The DGA/G signature appears at 215 to 217 (DGG).

The protein belongs to the patatin family.

It localises to the vacuole. Probable lipolytic acyl hydrolase (LAH), an activity which is thought to be involved in the response of tubers to pathogens. This Solanum tuberosum (Potato) protein is Patatin-B1 (PATB1).